A 323-amino-acid polypeptide reads, in one-letter code: Acetyl esterase (323 aa).

The Involved in the stabilization of the negatively charged intermediate by the formation of the oxyanion hole signature appears at 91-93 (HGG). Catalysis depends on residues serine 165, aspartate 262, and histidine 292.

This sequence belongs to the 'GDXG' lipolytic enzyme family. Homodimer. Interacts with MalT and MelA.

It localises to the cytoplasm. Functionally, displays esterase activity towards short chain fatty esters (acyl chain length of up to 8 carbons). Able to hydrolyze triacetylglycerol (triacetin) and tributyrylglycerol (tributyrin), but not trioleylglycerol (triolein) or cholesterol oleate. Negatively regulates MalT activity by antagonizing maltotriose binding. Inhibits MelA galactosidase activity. The sequence is that of Acetyl esterase from Salmonella paratyphi A (strain AKU_12601).